The sequence spans 1061 residues: Calcium-transporting ATPase 4, endoplasmic reticulum-type (1061 aa).

Residues 1 to 21 (MGKGGEDCGNKQTNSSELVKS) form a disordered region. The Cytoplasmic portion of the chain corresponds to 1-70 (MGKGGEDCGN…NELEKPEGTS (70 aa)). Residues 71–91 (IFKLILEQFNDTLVRILLAAA) traverse the membrane as a helical segment. The Lumenal portion of the chain corresponds to 92–115 (VISFVLAFFDGDEGGEMGITAFVE). The helical transmembrane segment at 116–135 (PLVIFLILIVNAIVGIWQET) threads the bilayer. Over 136 to 278 (NAEKALEALK…EEDTPLKKKL (143 aa)) the chain is Cytoplasmic. A helical transmembrane segment spans residues 279–298 (NEFGEVLTMIIGLICALVWL). Residues 299–327 (INVKYFLSWEYVDGWPRNFKFSFEKCTYY) are Lumenal-facing. Residues 328-345 (FEIAVALAVAAIPEGLPA) form a helical membrane-spanning segment. Valine 336, alanine 337, isoleucine 339, and glutamate 341 together coordinate Ca(2+). The Cytoplasmic segment spans residues 346 to 786 (VITTCLALGT…GEGRSIYNNM (441 aa)). Aspartate 383 functions as the 4-aspartylphosphate intermediate in the catalytic mechanism. Mg(2+) contacts are provided by aspartate 731 and aspartate 735. The chain crosses the membrane as a helical span at residues 787–806 (KAFIRYMISSNIGEVASIFL). Ca(2+) is bound by residues asparagine 797 and glutamate 800. Over 807-816 (TAALGIPEGM) the chain is Lumenal. Residues 817–837 (IPVQLLWVNLVTDGPPATALG) traverse the membrane as a helical segment. The Ca(2+) site is built by asparagine 825, threonine 828, and aspartate 829. Topologically, residues 838–857 (FNPPDKDIMKKPPRRSDDSL) are cytoplasmic. A helical membrane pass occupies residues 858–880 (ITAWILFRYMVIGLYVGVATVGV). The Lumenal segment spans residues 881–950 (FIIWYTHNSF…YFQQGKIKAS (70 aa)). Residues 951–970 (TLSLSVLVAIEMFNSLNALS) form a helical membrane-spanning segment. Glutamate 961 provides a ligand contact to Ca(2+). The Cytoplasmic portion of the chain corresponds to 971 to 983 (EDGSLVTMPPWVN). Residues 984–1002 (PWLLLAMAVSFGLHFVILY) form a helical membrane-spanning segment. Over 1003–1017 (VPFLAQVFGIVPLSL) the chain is Lumenal. A helical membrane pass occupies residues 1018–1038 (NEWLLVLAVSLPVILIDEVLK). Topologically, residues 1039–1061 (FVGRCTSGYRYSPRTPSAKQKEE) are cytoplasmic.

It belongs to the cation transport ATPase (P-type) (TC 3.A.3) family. Type IIA subfamily.

It localises to the membrane. It catalyses the reaction Ca(2+)(in) + ATP + H2O = Ca(2+)(out) + ADP + phosphate + H(+). In terms of biological role, this magnesium-dependent enzyme catalyzes the hydrolysis of ATP coupled with the translocation of calcium from the cytosol to an endomembrane compartment. This is Calcium-transporting ATPase 4, endoplasmic reticulum-type (ECA4) from Arabidopsis thaliana (Mouse-ear cress).